We begin with the raw amino-acid sequence, 133 residues long: Large ribosomal subunit protein bL12 (133 aa).

This sequence belongs to the bacterial ribosomal protein bL12 family. As to quaternary structure, homodimer. Part of the ribosomal stalk of the 50S ribosomal subunit. Forms a multimeric L10(L12)X complex, where L10 forms an elongated spine to which 2 to 4 L12 dimers bind in a sequential fashion. Binds GTP-bound translation factors.

In terms of biological role, forms part of the ribosomal stalk which helps the ribosome interact with GTP-bound translation factors. Is thus essential for accurate translation. The protein is Large ribosomal subunit protein bL12 of Trichodesmium erythraeum (strain IMS101).